Reading from the N-terminus, the 150-residue chain is Interferon antagonist OPG027 (150 aa).

It belongs to the orthopoxvirus OPG027 family.

Functionally, inhibits antiviral activity induced by type I interferons. Does not block signal transduction of IFN, but is important to counteract the host antiviral state induced by a pre-treatment with IFN. The chain is Interferon antagonist OPG027 (OPG027) from Homo sapiens (Human).